The chain runs to 1341 residues: DNA-directed RNA polymerase subunit Rpo1N (1341 aa).

Residues cysteine 62, cysteine 65, cysteine 72, histidine 75, cysteine 102, cysteine 105, cysteine 149, and cysteine 152 each contribute to the Zn(2+) site. Mg(2+) contacts are provided by aspartate 918, aspartate 920, and aspartate 922.

Belongs to the RNA polymerase beta' chain family. Part of the RNA polymerase complex. Mg(2+) serves as cofactor. Zn(2+) is required as a cofactor. This protein undergoes a protein self splicing that involves a post-translational excision of the intervening region (intein) followed by peptide ligation.

It localises to the cytoplasm. It catalyses the reaction RNA(n) + a ribonucleoside 5'-triphosphate = RNA(n+1) + diphosphate. Functionally, DNA-dependent RNA polymerase (RNAP) catalyzes the transcription of DNA into RNA using the four ribonucleoside triphosphates as substrates. Forms the clamp head domain. The protein is DNA-directed RNA polymerase subunit Rpo1N of Methanocaldococcus jannaschii (strain ATCC 43067 / DSM 2661 / JAL-1 / JCM 10045 / NBRC 100440) (Methanococcus jannaschii).